A 448-amino-acid polypeptide reads, in one-letter code: Asparagine--tRNA ligase (448 aa).

This sequence belongs to the class-II aminoacyl-tRNA synthetase family. In terms of assembly, homodimer.

It localises to the cytoplasm. It catalyses the reaction tRNA(Asn) + L-asparagine + ATP = L-asparaginyl-tRNA(Asn) + AMP + diphosphate + H(+). The sequence is that of Asparagine--tRNA ligase from Streptococcus suis (strain 98HAH33).